The following is a 434-amino-acid chain: Serine--tRNA ligase (434 aa).

Residue 237–239 (TAE) participates in L-serine binding. 268-270 (RAE) lines the ATP pocket. E291 lines the L-serine pocket. 358 to 361 (EISS) is an ATP binding site. S393 lines the L-serine pocket.

Belongs to the class-II aminoacyl-tRNA synthetase family. Type-1 seryl-tRNA synthetase subfamily. In terms of assembly, homodimer. The tRNA molecule binds across the dimer.

The protein localises to the cytoplasm. The enzyme catalyses tRNA(Ser) + L-serine + ATP = L-seryl-tRNA(Ser) + AMP + diphosphate + H(+). It catalyses the reaction tRNA(Sec) + L-serine + ATP = L-seryl-tRNA(Sec) + AMP + diphosphate + H(+). It participates in aminoacyl-tRNA biosynthesis; selenocysteinyl-tRNA(Sec) biosynthesis; L-seryl-tRNA(Sec) from L-serine and tRNA(Sec): step 1/1. Its function is as follows. Catalyzes the attachment of serine to tRNA(Ser). Is also able to aminoacylate tRNA(Sec) with serine, to form the misacylated tRNA L-seryl-tRNA(Sec), which will be further converted into selenocysteinyl-tRNA(Sec). This chain is Serine--tRNA ligase, found in Rhodopseudomonas palustris (strain ATCC BAA-98 / CGA009).